The following is a 577-amino-acid chain: Protein hinderin (577 aa).

Ser-21 is subject to Phosphoserine. The stretch at 91 to 167 (LKDLCLEDKR…CQELLSLYQK (77 aa)) forms a coiled coil. Ser-179 bears the Phosphoserine mark. Residues 251–282 (TLHHPKDDLDKIPSETTTCNCESPGRKPAVPT) are disordered. Positions 254–263 (HPKDDLDKIP) are enriched in basic and acidic residues. Residues 358 to 402 (LKKQISEDRKQQLMLQKMELEIEKERLQHLLAQQETKLLLKQQQL) adopt a coiled-coil conformation. Disordered stretches follow at residues 425–444 (SSSIKKHQDPPNSGENRKER), 449–492 (FHSH…GSLK), and 520–540 (LSPNSAPKPQRYPSREAGAWN). The segment covering 449 to 468 (FHSHMKDDAQWSCQKKDTCR) has biased composition (basic and acidic residues). Phosphoserine occurs at positions 490 and 521.

As to quaternary structure, interacts (via N- and C-terminal domains) with SMC3 (via central hinge region). As to expression, widely expressed.

Functionally, competes with SMC1 for binding to SMC3. May affect the availability of SMC3 to engage in the formation of multimeric protein complexes. The polypeptide is Protein hinderin (KIAA1328) (Homo sapiens (Human)).